The following is a 329-amino-acid chain: Fructose-1,6-bisphosphatase class 1 (329 aa).

Mg(2+) is bound by residues Glu-84, Asp-103, Leu-105, and Asp-106. Substrate is bound by residues 106-109 (DGSS), Asn-196, and Lys-262. Residue Glu-268 coordinates Mg(2+).

It belongs to the FBPase class 1 family. In terms of assembly, homotetramer. Mg(2+) is required as a cofactor.

Its subcellular location is the cytoplasm. The catalysed reaction is beta-D-fructose 1,6-bisphosphate + H2O = beta-D-fructose 6-phosphate + phosphate. The protein operates within carbohydrate biosynthesis; gluconeogenesis. The polypeptide is Fructose-1,6-bisphosphatase class 1 (Shewanella pealeana (strain ATCC 700345 / ANG-SQ1)).